A 579-amino-acid chain; its full sequence is 2-isopropylmalate synthase (579 aa).

Positions 40–314 constitute a Pyruvate carboxyltransferase domain; it reads PRWCAVDLRD…DPMIDFSDID (275 aa). Mg(2+) is bound by residues D49, H253, H255, and N289. The interval 456–579 is regulatory domain; the sequence is SGKADGQWGR…VNRAIRDAQS (124 aa).

Belongs to the alpha-IPM synthase/homocitrate synthase family. LeuA type 2 subfamily. As to quaternary structure, homodimer. It depends on Mg(2+) as a cofactor.

The protein resides in the cytoplasm. The catalysed reaction is 3-methyl-2-oxobutanoate + acetyl-CoA + H2O = (2S)-2-isopropylmalate + CoA + H(+). Its pathway is amino-acid biosynthesis; L-leucine biosynthesis; L-leucine from 3-methyl-2-oxobutanoate: step 1/4. Functionally, catalyzes the condensation of the acetyl group of acetyl-CoA with 3-methyl-2-oxobutanoate (2-ketoisovalerate) to form 3-carboxy-3-hydroxy-4-methylpentanoate (2-isopropylmalate). This Pseudarthrobacter chlorophenolicus (strain ATCC 700700 / DSM 12829 / CIP 107037 / JCM 12360 / KCTC 9906 / NCIMB 13794 / A6) (Arthrobacter chlorophenolicus) protein is 2-isopropylmalate synthase.